Consider the following 74-residue polypeptide: DNA-directed RNA polymerase subunit omega (74 aa).

Belongs to the RNA polymerase subunit omega family. In terms of assembly, the RNAP catalytic core consists of 2 alpha, 1 beta, 1 beta' and 1 omega subunit. When a sigma factor is associated with the core the holoenzyme is formed, which can initiate transcription.

It catalyses the reaction RNA(n) + a ribonucleoside 5'-triphosphate = RNA(n+1) + diphosphate. In terms of biological role, promotes RNA polymerase assembly. Latches the N- and C-terminal regions of the beta' subunit thereby facilitating its interaction with the beta and alpha subunits. This is DNA-directed RNA polymerase subunit omega from Marinomonas sp. (strain MWYL1).